A 579-amino-acid polypeptide reads, in one-letter code: Kelch repeat and BTB domain-containing protein F47D12.7 (579 aa).

Residues 51–119 (PTVTLVLRNN…PKAFEQGIKP (69 aa)) enclose the BTB domain. Kelch repeat units follow at residues 266–316 (AIVC…VVED), 317–363 (KLIV…RVND), 369–415 (LVFA…TIDN), 417–463 (IVAI…SIMN), 465–511 (VCMI…QMDT), and 513–559 (YVYV…TLSD).

The chain is Kelch repeat and BTB domain-containing protein F47D12.7 from Caenorhabditis elegans.